A 131-amino-acid polypeptide reads, in one-letter code: Global transcriptional regulator Spx 2 (131 aa).

The cysteines at positions 10 and 13 are disulfide-linked.

This sequence belongs to the ArsC family. Spx subfamily. Interacts with the C-terminal domain of the alpha subunit of the RNAP.

It is found in the cytoplasm. Global transcriptional regulator that plays a key role in stress response and exerts either positive or negative regulation of genes. Acts by interacting with the C-terminal domain of the alpha subunit of the RNA polymerase (RNAP). This interaction can enhance binding of RNAP to the promoter region of target genes and stimulate their transcription, or block interaction of RNAP with activator. This Bacillus anthracis protein is Global transcriptional regulator Spx 2.